The following is a 337-amino-acid chain: DNA replication regulator sld2 (337 aa).

Thr-60 and Thr-74 each carry phosphothreonine; by cdc2. The segment at 71-97 is disordered; it reads KFQTPTKQRAETEANESPKAPRNDYLQ. At Ser-87 the chain carries Phosphoserine; by cdc2. Phosphothreonine; by cdc2 occurs at positions 99 and 154. Ser-183 carries the phosphoserine modification. A disordered region spans residues 258-302; it reads SMNLSKSHLEGLPEIDEDAENGIDDNEDTTASKDSSPFLDLQSER. A compositionally biased stretch (acidic residues) spans 270–285; sequence PEIDEDAENGIDDNED.

It belongs to the SLD2 family. In terms of assembly, interacts with rad4. Post-translationally, phosphorylated by cdc2 at the onset of S-phase.

The protein localises to the cytoplasm. The protein resides in the nucleus. Its function is as follows. Has a role in the initiation of DNA replication. Required at S-phase checkpoint. This is DNA replication regulator sld2 (drc1) from Schizosaccharomyces pombe (strain 972 / ATCC 24843) (Fission yeast).